A 154-amino-acid polypeptide reads, in one-letter code: Putative pre-16S rRNA nuclease (154 aa).

Belongs to the YqgF nuclease family.

It localises to the cytoplasm. Functionally, could be a nuclease involved in processing of the 5'-end of pre-16S rRNA. The chain is Putative pre-16S rRNA nuclease from Gluconacetobacter diazotrophicus (strain ATCC 49037 / DSM 5601 / CCUG 37298 / CIP 103539 / LMG 7603 / PAl5).